The sequence spans 1072 residues: DNA-directed RNA polymerase subunit beta (1072 aa).

It belongs to the RNA polymerase beta chain family. In terms of assembly, in plastids the minimal PEP RNA polymerase catalytic core is composed of four subunits: alpha, beta, beta', and beta''. When a (nuclear-encoded) sigma factor is associated with the core the holoenzyme is formed, which can initiate transcription.

The protein resides in the plastid. It is found in the chloroplast. It carries out the reaction RNA(n) + a ribonucleoside 5'-triphosphate = RNA(n+1) + diphosphate. Its function is as follows. DNA-dependent RNA polymerase catalyzes the transcription of DNA into RNA using the four ribonucleoside triphosphates as substrates. This Nasturtium officinale (Watercress) protein is DNA-directed RNA polymerase subunit beta.